We begin with the raw amino-acid sequence, 252 residues long: Putative peptide zinc metalloprotease protein YydH (252 aa).

Transmembrane regions (helical) follow at residues 56–76 and 85–105; these read FFYLFLSFTALMFILNYIHLI and VFYGWKMWIIIVIYFIMNIVL. His-106 is a Zn(2+) binding site. The active site involves Glu-107. His-110 contacts Zn(2+). Transmembrane regions (helical) follow at residues 152 to 172, 181 to 201, and 231 to 251; these read IIVHLFGLFINYLLINTLELI, ALTMAFMLFSSTLLWNLIPIL, and IQIIGIGLAVNSVVHWILYIV.

Belongs to the peptidase M50B family. It depends on Zn(2+) as a cofactor.

Its subcellular location is the cell membrane. Functionally, required for production of the modified peptide YydF. May process the precursor form of YydF to release the active peptide (Potential). The chain is Putative peptide zinc metalloprotease protein YydH (yydH) from Bacillus subtilis (strain 168).